Consider the following 75-residue polypeptide: Vacuolar ATPase assembly integral membrane protein VMA21 (75 aa).

Residues 1–8 (MPVDVAPG) are Cytoplasmic-facing. Residues 9–29 (VIKKLMFFTAAMVICPLLTFF) traverse the membrane as a helical segment. The Lumenal portion of the chain corresponds to 30–41 (SIKQFTTNTIVS). Residues 42–62 (GGLAALAANLVLIGYIVVAFM) traverse the membrane as a helical segment. Topologically, residues 63-75 (EDTTDVKAESKKD) are cytoplasmic.

Belongs to the VMA21 family.

The protein localises to the endoplasmic reticulum membrane. It is found in the endoplasmic reticulum-Golgi intermediate compartment membrane. It localises to the cytoplasmic vesicle. Its subcellular location is the COPII-coated vesicle membrane. In terms of biological role, required for the assembly of the V0 complex of the vacuolar ATPase (V-ATPase) in the endoplasmic reticulum. The sequence is that of Vacuolar ATPase assembly integral membrane protein VMA21 from Vanderwaltozyma polyspora (strain ATCC 22028 / DSM 70294 / BCRC 21397 / CBS 2163 / NBRC 10782 / NRRL Y-8283 / UCD 57-17) (Kluyveromyces polysporus).